The primary structure comprises 360 residues: MSRTTVALFFGGQSAEHEISIISAQSIAAHLDTERFTLLPIYITHSGEWLCDGFARTLLTTNLASKLRGSSREETAAALQQMVRNAAQAPCNRNLAALGVDVAFLALHGSFGEDGRMQGFLETCGIPYTGCGVLASALTMDKALTKLCVADAGIAVAQGTNILSADYLANPNAVEASVEAQVSYPLFVKPASLGSSIGISKVHNREELHPALQAACALDWKVVVESTVKGREIEVAVLGNADPIASVCGEIEPGKEFYDFQDKYMGNSAKLFIPARIPESLQEEVRRSALTAYRALGCSGMARVDFFVDESTNSVVLNEVNTIPGFTDISMYPQMMEASGISYRNLITRLLELALEPLRR.

An ATP-grasp domain is found at 146-352 (KLCVADAGIA…YRNLITRLLE (207 aa)). 179–234 (EAQVSYPLFVKPASLGSSIGISKVHNREELHPALQAACALDWKVVVESTVKGREIE) is a binding site for ATP. Residues Asp305, Glu319, and Asn321 each coordinate Mg(2+).

It belongs to the D-alanine--D-alanine ligase family. Requires Mg(2+) as cofactor. Mn(2+) serves as cofactor.

It is found in the cytoplasm. It carries out the reaction 2 D-alanine + ATP = D-alanyl-D-alanine + ADP + phosphate + H(+). The protein operates within cell wall biogenesis; peptidoglycan biosynthesis. Its function is as follows. Cell wall formation. The sequence is that of D-alanine--D-alanine ligase from Chlorobium chlorochromatii (strain CaD3).